We begin with the raw amino-acid sequence, 260 residues long: Myb transcription factor 42 (260 aa).

2 HTH myb-type domains span residues 9–61 (KAHT…INYL) and 62–116 (RPDL…RRKL). 2 consecutive DNA-binding regions (H-T-H motif) follow at residues 37 to 61 (WRSL…INYL) and 89 to 112 (WSLI…NTHI).

Mainly expressed in the aerial parts and, to a lower extent, in roots.

It is found in the nucleus. Its function is as follows. Transcription factor that negatively regulates the expression of caffeic acid O-methyl-transferase genes (COMTs) and of other genes involved in the biosynthesis of lignin, thus preventing lignification. The sequence is that of Myb transcription factor 42 from Zea mays (Maize).